The primary structure comprises 102 residues: NADH-quinone oxidoreductase subunit K (102 aa).

A run of 3 helical transmembrane segments spans residues 6–26 (LIGMMILAAGLFAIGLFGVLA), 30–50 (ILFQLVALEVALSGPALAFVA), and 63–83 (MLILVLTLAAAEVAVGLALLL).

The protein belongs to the complex I subunit 4L family. As to quaternary structure, NDH-1 is composed of 14 different subunits. Subunits NuoA, H, J, K, L, M, N constitute the membrane sector of the complex.

The protein resides in the cell inner membrane. It catalyses the reaction a quinone + NADH + 5 H(+)(in) = a quinol + NAD(+) + 4 H(+)(out). In terms of biological role, NDH-1 shuttles electrons from NADH, via FMN and iron-sulfur (Fe-S) centers, to quinones in the respiratory chain. The immediate electron acceptor for the enzyme in this species is believed to be ubiquinone. Couples the redox reaction to proton translocation (for every two electrons transferred, four hydrogen ions are translocated across the cytoplasmic membrane), and thus conserves the redox energy in a proton gradient. The protein is NADH-quinone oxidoreductase subunit K of Rhodopseudomonas palustris (strain HaA2).